A 644-amino-acid chain; its full sequence is Protein ETHYLENE-INSENSITIVE 3-like 1b (644 aa).

Disordered regions lie at residues 47–75 (QCVM…DDDV) and 97–131 (ELQL…KMSR). Acidic residues predominate over residues 66–75 (AGEDDSDDDV).

It belongs to the EIN3 family. In terms of tissue distribution, highly expressed in roots. Expressed at low levels in leaves and panicles.

It localises to the nucleus. Transcription factor acting as a positive regulator in the ethylene response pathway. Involved in wound signaling by binding specifically to the DNA sequence 5'-ATGTACCT-3' found in the promoter of some wound-inducible genes. Binds directly to the DNA sequence 5'-TGTTACAAATACC-3' in the promoter of the GA20OX2 gene to activate its expression at the transcriptional level during ethylene signaling. This is Protein ETHYLENE-INSENSITIVE 3-like 1b from Oryza sativa subsp. japonica (Rice).